The chain runs to 98 residues: Integration host factor subunit alpha (98 aa).

It belongs to the bacterial histone-like protein family. In terms of assembly, heterodimer of an alpha and a beta chain.

This protein is one of the two subunits of integration host factor, a specific DNA-binding protein that functions in genetic recombination as well as in transcriptional and translational control. In Glaesserella parasuis serovar 5 (strain SH0165) (Haemophilus parasuis), this protein is Integration host factor subunit alpha.